Here is a 141-residue protein sequence, read N- to C-terminus: Hemoglobin subunit alpha-3 (141 aa).

The Globin domain occupies 1 to 141; that stretch reads VLSPADKTNV…VSTVLTSKYR (141 aa). His-58 contacts O2. A heme b-binding site is contributed by His-87.

It belongs to the globin family. As to quaternary structure, heterotetramer of two alpha chains and two beta chains. In terms of tissue distribution, red blood cells.

In terms of biological role, involved in oxygen transport from the lung to the various peripheral tissues. This is Hemoglobin subunit alpha-3 from Pan troglodytes (Chimpanzee).